Consider the following 225-residue polypeptide: Urease accessory protein UreG 2 (225 aa).

31 to 38 (GPVGSGKT) contacts GTP.

Belongs to the SIMIBI class G3E GTPase family. UreG subfamily. As to quaternary structure, homodimer. UreD, UreF and UreG form a complex that acts as a GTP-hydrolysis-dependent molecular chaperone, activating the urease apoprotein by helping to assemble the nickel containing metallocenter of UreC. The UreE protein probably delivers the nickel.

The protein resides in the cytoplasm. Its function is as follows. Facilitates the functional incorporation of the urease nickel metallocenter. This process requires GTP hydrolysis, probably effectuated by UreG. The protein is Urease accessory protein UreG 2 of Streptomyces griseus subsp. griseus (strain JCM 4626 / CBS 651.72 / NBRC 13350 / KCC S-0626 / ISP 5235).